The sequence spans 142 residues: Protein OrfX1 (142 aa).

This sequence belongs to the TULIP P47 family. As to quaternary structure, orfX1 was not detected as part of a crude toxin extract that includes BoNTA2/NTNH, P47, OrfX2 and OrfX3.

Its function is as follows. Part of a botulinum neurotoxin type A2 (BoNT) locus; may be part of a progenitor toxin complex required to protect BoNT during its passage through the host gastrointestinal tract. Binds phosphatidylinositol (3,4) bisphosphate, phosphatidylethanolamine and phosphatidylserine. The protein is Protein OrfX1 (orfX1) of Clostridium botulinum (strain Kyoto / Type A2).